The following is a 377-amino-acid chain: Signal peptide peptidase (377 aa).

The tract at residues 1 to 27 (MDSALSDPHNGSAEAGGPTNSTTRPPS) is disordered. Topologically, residues 1-31 (MDSALSDPHNGSAEAGGPTNSTTRPPSTPEG) are lumenal. N-linked (GlcNAc...) asparagine glycosylation is found at N10 and N20. The helical transmembrane segment at 32-52 (IALAYGSLLLMALLPIFFGAL) threads the bilayer. Over 53–77 (RSVRCARGKNASDMPETITSRDAAR) the chain is Cytoplasmic. The helical transmembrane segment at 78-98 (FPIIASCTLLGLYLFFKIFSQ) threads the bilayer. At 99 to 100 (EY) the chain is on the lumenal side. Residues 101–121 (INLLLSMYFFVLGILALSHTI) form a helical membrane-spanning segment. Topologically, residues 122-157 (SPFMNKFFPASFPNRQYQLLFTQGSGENKEEIINYE) are cytoplasmic. Residues 158-178 (FDTKDLVCLGLSSIVGVWYLL) traverse the membrane as a helical segment. The Lumenal portion of the chain corresponds to 179-181 (RKH). The chain crosses the membrane as a helical span at residues 182 to 202 (WIANNLFGLAFSLNGVELLHL). The Cytoplasmic portion of the chain corresponds to 203 to 209 (NNVSTGC). The chain crosses the membrane as a helical span at residues 210–230 (ILLGGLFIYDVFWVFGTNVMV). Residue D219 is part of the active site. Residues 231–256 (TVAKSFEAPIKLVFPQDLLEKGLEAN) are Lumenal-facing. Residues 257-277 (NFAMLGLGDVVIPGIFIALLL) traverse the membrane as a helical segment. Residue D265 is part of the active site. Over 278-290 (RFDISLKKNTHTY) the chain is Cytoplasmic. The chain crosses the membrane as a helical span at residues 291 to 311 (FYTSFAAYIFGLGLTIFIMHI). Over 312-314 (FKH) the chain is Lumenal. The chain crosses the membrane as a helical span at residues 315 to 335 (AQPALLYLVPACIGFPVLVAL). The PAL motif lies at 317-319 (PAL). Residues 336–377 (AKGEVTEMFSYEESNPKDPAAVTESKEGTEASASKGLEKKEK) are Cytoplasmic-facing. The disordered stretch occupies residues 345-377 (SYEESNPKDPAAVTESKEGTEASASKGLEKKEK). Phosphoserine is present on S367.

Belongs to the peptidase A22B family. As to quaternary structure, monomer. Homodimer. Interacts with RNF139. Interacts with DERL1 and XBP1 isoform 1. In terms of processing, N-glycosylated. In terms of tissue distribution, widely expressed with highest levels in kidney, liver, placenta, lung, leukocytes and small intestine and reduced expression in heart and skeletal muscle. Expressed abundantly in the CNS with highest levels in thalamus and medulla.

Its subcellular location is the endoplasmic reticulum membrane. The protein localises to the membrane. It is found in the cell membrane. In terms of biological role, catalyzes intramembrane proteolysis of signal peptides that have been removed from precursors of secretory and membrane proteins, resulting in the release of the fragment from the ER membrane into the cytoplasm. Required to generate lymphocyte cell surface (HLA-E) epitopes derived from MHC class I signal peptides. May be necessary for the removal of the signal peptide that remains attached to the hepatitis C virus core protein after the initial proteolytic processing of the polyprotein. Involved in the intramembrane cleavage of the integral membrane protein PSEN1. Cleaves the integral membrane protein XBP1 isoform 1 in a DERL1/RNF139-dependent manner. May play a role in graft rejection. This is Signal peptide peptidase from Homo sapiens (Human).